Here is a 405-residue protein sequence, read N- to C-terminus: MGCTRGWRLLLLLGLVCVGALQGRGQEESREVSLQYNPGSSDTSVNVVHVRAVGNGSTIHYVWSTIGTPTVLLIFTHSETSQLQVNWTKLLSPAPQGALRIEPAESVSYATALLFTRIFEYQDVNNTANFSGTDEKYFYPAYNLSDFLWDSANATINATSLSANLTGYNASDPTDSFHNGSVSFRISAYSSSGRDSSSPRLRHTANCTKLEFLVAGVRPRGNNSRFALEMVTIEKEGRKKMESVHSIDDEYTPTIFEMMQLVPDAPNSSHARGFLQWKSVAYGSPSGTRADILPCQLHPLRPFNTTFPAGSIAHAYFGDDLADAYKLEAFNISFGIADGDFYDKNRFLSWSALIGYGEPPRDSFSILVICIMAVALGTPLLLLIVGTLVVTALRHKVYSNYEPIN.

The first 25 residues, M1 to G25, serve as a signal peptide directing secretion. The Lumenal segment spans residues Q26 to S365. N-linked (GlcNAc...) asparagine glycans are attached at residues N55, N86, N125, N129, N143, N153, N157, N164, N169, N179, N206, N222, N267, N304, and N331. The chain crosses the membrane as a helical span at residues I366 to G386. Topologically, residues T387 to N405 are cytoplasmic. The short motif at Y401 to N405 is the Lysosomal targeting motif element.

The protein belongs to the GLMP family. In terms of assembly, interacts (via lumenal domain) with lysosomal protein MFSD1; the interaction starts while both proteins are still in the endoplasmic reticulum and is required for stabilization of MFSD1 in lysosomes but has no direct effect on its targeting to lysosomes or transporter activity.

The protein localises to the lysosome membrane. Functionally, required to protect lysosomal transporter MFSD1 from lysosomal proteolysis and for MFSD1 lysosomal localization. The polypeptide is Glycosylated lysosomal membrane protein A (glmp-a) (Xenopus laevis (African clawed frog)).